The following is a 249-amino-acid chain: Chitooligosaccharide deacetylase (249 aa).

His61 and His125 together coordinate Mg(2+).

This sequence belongs to the YdjC deacetylase family. ChbG subfamily. As to quaternary structure, homodimer. It depends on Mg(2+) as a cofactor.

Its subcellular location is the cytoplasm. It catalyses the reaction N,N'-diacetylchitobiose + H2O = N-acetyl-beta-D-glucosaminyl-(1-&gt;4)-D-glucosamine + acetate. The enzyme catalyses diacetylchitobiose-6'-phosphate + H2O = N'-monoacetylchitobiose-6'-phosphate + acetate. The protein operates within glycan degradation; chitin degradation. Its function is as follows. Involved in the degradation of chitin. ChbG is essential for growth on the acetylated chitooligosaccharides chitobiose and chitotriose but is dispensable for growth on cellobiose and chitosan dimer, the deacetylated form of chitobiose. Deacetylation of chitobiose-6-P and chitotriose-6-P is necessary for both the activation of the chb promoter by the regulatory protein ChbR and the hydrolysis of phosphorylated beta-glucosides by the phospho-beta-glucosidase ChbF. Catalyzes the removal of only one acetyl group from chitobiose-6-P to yield monoacetylchitobiose-6-P, the inducer of ChbR and the substrate of ChbF. The polypeptide is Chitooligosaccharide deacetylase (Escherichia coli (strain K12 / MC4100 / BW2952)).